Reading from the N-terminus, the 185-residue chain is Elongation factor P (185 aa).

This sequence belongs to the elongation factor P family.

It localises to the cytoplasm. The protein operates within protein biosynthesis; polypeptide chain elongation. Involved in peptide bond synthesis. Stimulates efficient translation and peptide-bond synthesis on native or reconstituted 70S ribosomes in vitro. Probably functions indirectly by altering the affinity of the ribosome for aminoacyl-tRNA, thus increasing their reactivity as acceptors for peptidyl transferase. The polypeptide is Elongation factor P (Burkholderia ambifaria (strain MC40-6)).